The primary structure comprises 346 residues: MRFVDEVTFVVRAGDGGDGCVHFRREKYVPRGGPDGGDGGRGGSVYLEGDEGLNTLVDYRHDRFFSAESGEAGGGRQCTGRSGVDRILPVPVGTLVMDEGTGEVIGDVTRDGERLLVAAGGRGGLGNLHFKSSTNRAPRQSTEGTAGESRELRLELQLLADVGLLGMPNVGKSTLIRTISAARPKVADYPFTTLYPQLGVVRYEAQRSFVVADIPGIIEGAAEGAGLGVRFLKHLSRTGLLLHLVDGVAEEERGGDPVADAQTLLAELEAFSPELAQKPRWLVVNRLDALPEEMRAERVAEIARGLGWDGPVYGISGLTGEGVDRLCGDIMNDLEARRREEDGETA.

The 159-residue stretch at 1 to 159 (MRFVDEVTFV…RELRLELQLL (159 aa)) folds into the Obg domain. The disordered stretch occupies residues 128 to 148 (LHFKSSTNRAPRQSTEGTAGE). The segment covering 130 to 144 (FKSSTNRAPRQSTEG) has biased composition (polar residues). One can recognise an OBG-type G domain in the interval 160 to 335 (ADVGLLGMPN…LCGDIMNDLE (176 aa)). Residues 166 to 173 (GMPNVGKS), 191 to 195 (FTTLY), 213 to 216 (DIPG), 285 to 288 (NRLD), and 316 to 318 (SGL) each bind GTP. Serine 173 and threonine 193 together coordinate Mg(2+).

It belongs to the TRAFAC class OBG-HflX-like GTPase superfamily. OBG GTPase family. Monomer. The cofactor is Mg(2+).

Its subcellular location is the cytoplasm. In terms of biological role, an essential GTPase which binds GTP, GDP and possibly (p)ppGpp with moderate affinity, with high nucleotide exchange rates and a fairly low GTP hydrolysis rate. Plays a role in control of the cell cycle, stress response, ribosome biogenesis and in those bacteria that undergo differentiation, in morphogenesis control. This chain is GTPase Obg, found in Halorhodospira halophila (strain DSM 244 / SL1) (Ectothiorhodospira halophila (strain DSM 244 / SL1)).